We begin with the raw amino-acid sequence, 737 residues long: Protein OPG064 (737 aa).

An N-acetylmethionine; by host modification is found at methionine 1. An intrachain disulfide couples cysteine 496 to cysteine 535.

Belongs to the orthopoxvirus OPG064 family. Interacts with host KLC2; this interaction promotes IEV trafficking by engaging the host kinesin-1 complex. Interacts with protein OPG056/F12. In terms of processing, N-acetylated on initiator methionine by host.

In terms of biological role, plays a role in intracellular enveloped virus (IEV) transport to the cell surface on microtubules. Together with protein OPG056/F12, forms a complex that interacts with host KLC2 (kinesin light chain isoform 2) to engage the kinesin-1 complex and thereby promote IEV trafficking. The sequence is that of Protein OPG064 (OPG064) from Bos taurus (Bovine).